Consider the following 235-residue polypeptide: Small ribosomal subunit protein uS3 (235 aa).

The 69-residue stretch at 39–107 (IRTYIENELK…ETHLNIVEVR (69 aa)) folds into the KH type-2 domain. A disordered region spans residues 215-235 (SERRAVEGAGDGGGQRRRENA).

Belongs to the universal ribosomal protein uS3 family. Part of the 30S ribosomal subunit. Forms a tight complex with proteins S10 and S14.

Functionally, binds the lower part of the 30S subunit head. Binds mRNA in the 70S ribosome, positioning it for translation. The protein is Small ribosomal subunit protein uS3 of Chelativorans sp. (strain BNC1).